Reading from the N-terminus, the 95-residue chain is Mitochondrial import inner membrane translocase subunit Tim9 (95 aa).

Positions 35–59 (CFTDCIRDFTTRDVKDSEEKCSLNC) match the Twin CX3C motif motif. Intrachain disulfides connect C35-C59 and C39-C55.

This sequence belongs to the small Tim family. As to quaternary structure, heterohexamer; composed of 3 copies of Tim9 and 3 copies of Tim10, named soluble 70 kDa complex. The complex associates with the Tim22 component of the TIM22 complex. Interacts with multi-pass transmembrane proteins in transit.

Its subcellular location is the mitochondrion inner membrane. Mitochondrial intermembrane chaperone that participates in the import and insertion of multi-pass transmembrane proteins into the mitochondrial inner membrane. May also be required for the transfer of beta-barrel precursors from the TOM complex to the sorting and assembly machinery (SAM complex) of the outer membrane. Acts as a chaperone-like protein that protects the hydrophobic precursors from aggregation and guide them through the mitochondrial intermembrane space. The polypeptide is Mitochondrial import inner membrane translocase subunit Tim9 (Tim9a) (Drosophila melanogaster (Fruit fly)).